Reading from the N-terminus, the 1288-residue chain is MGGPEGRFHFAIDRGGTFTDVFAQCPGGHVRVLKLLSEDPANYVDAPTEGIRRILEQEGGVLLPRDRPLDTSRIASIRMGTTVATNALLERQGERVALLVTRGFRDLLHVGTQARADLFDLAVPMPETLYEEVLEVDERVVLYRGEPGAGTPVKGCTGDLLEVQQPVDLGGLRGKLEGLLSRGIRSLAVVLMHSYTWAQHEQQVGALARELGFTHVSLSSEAMPMVRIVPRGHTACADAYLTPTIQRYVQGFRRGFQGQLKDVQVLFMRSDGGLAPMDSFSGSRAVLSGPAGGVVGYSATTYRVEGGQPVIGFDMGGTSTDVSRYAGEFEHVFEASTAGVTLQAPQLDINTVAAGGGSRLFFRSGLFVVGPESAGAHPGPACYRKGGPVTVTDANLVLGRLLPASFPCIFGPGEDQPLSPEASRKALEAVATEVNSFLTNGPCPASPLSLEEVAMGFVRVANEAMCRPIRALTQARGHDPSAHVLACFGGAGGQHACAIARALGMDTVHIHRHSGLLSALGLALADVVHEAQEPCSLPYAPETFAQLDQRLGRLEEQCVEALRAQGFPRSQISTESFLHLRYQGTDCALMVSAHQHPASARSPRAGDFGAAFVERYMREFGFIIPERPVVVDDVRVRGTGSSSLRLEDVPKAHSGPPRVDKMTQCYFEGGYQETPVYLLGELGCGHKLQGPCLIIDSNSTILVEPGCQAEVTETGDIRISVGAETASVVGTQLDPIHLSIFSHRFMSIAEQMGRILQRTAISTNIKERLDFSCALFGPDGGLVSNAPHIPVHLGAMQETVQFQIQQLGADLHPGDVLLSNHPSAGGSHLPDLTVITPVFWPGQTRPVFYVASRGHHADIGGITPGSMPPHSTSLQQEGAVFLSFKLVHGGVFQEEAVTEALRAPGKIPGCSGTRNLHDNLSDLRAQVAANQKGIQLVGELIGQYGLDVVQAYMGHIQANAELAVRDMLRAFGTARQARGLPLEVSAEDHMDDGSPIRLRVQINMSQGSAVFDFSGSGPEVFGNLNAPRAITLSALIYCLRCLVGRDIPLNQGCLAPVRVVIPKGSILDPSPDAAVVGGNVLTSQRVVDVILGAFGACAASQGCMNNVTLGNAHMGYYETVAGGAGAGPGWHGRSGVHSHMTNTRITDPEILESRYPVILRRFELRLGSGGRGRFRGGDGIIRELLFREEALLSVLTERRAFQPYGLMGGEPGARGLNLLIRKDGRTVNLGGKTSVPVYPGDVFCLHTPGGGGYGDPEDPAPLPGSPLQPLAFPERGSVYEYRRAQEAV.

Position 151 is a phosphothreonine (Thr-151). Residues 1249–1269 are disordered; the sequence is GGGGYGDPEDPAPLPGSPLQP. Ser-1265 is subject to Phosphoserine.

Belongs to the oxoprolinase family. In terms of assembly, homodimer. As to expression, expressed in coronary artery and kidney.

It is found in the cytoplasm. Its subcellular location is the cytosol. The catalysed reaction is 5-oxo-L-proline + ATP + 2 H2O = L-glutamate + ADP + phosphate + H(+). Functionally, catalyzes the cleavage of 5-oxo-L-proline to form L-glutamate coupled to the hydrolysis of ATP to ADP and inorganic phosphate. The protein is 5-oxoprolinase (OPLAH) of Bos taurus (Bovine).